Reading from the N-terminus, the 89-residue chain is Probable Fe(2+)-trafficking protein (89 aa).

It belongs to the Fe(2+)-trafficking protein family.

Could be a mediator in iron transactions between iron acquisition and iron-requiring processes, such as synthesis and/or repair of Fe-S clusters in biosynthetic enzymes. The sequence is that of Probable Fe(2+)-trafficking protein from Legionella pneumophila (strain Lens).